A 197-amino-acid polypeptide reads, in one-letter code: 3-isopropylmalate dehydratase small subunit (197 aa).

This sequence belongs to the LeuD family. LeuD type 1 subfamily. As to quaternary structure, heterodimer of LeuC and LeuD.

It carries out the reaction (2R,3S)-3-isopropylmalate = (2S)-2-isopropylmalate. It participates in amino-acid biosynthesis; L-leucine biosynthesis; L-leucine from 3-methyl-2-oxobutanoate: step 2/4. Its function is as follows. Catalyzes the isomerization between 2-isopropylmalate and 3-isopropylmalate, via the formation of 2-isopropylmaleate. In Corynebacterium glutamicum (strain ATCC 13032 / DSM 20300 / JCM 1318 / BCRC 11384 / CCUG 27702 / LMG 3730 / NBRC 12168 / NCIMB 10025 / NRRL B-2784 / 534), this protein is 3-isopropylmalate dehydratase small subunit.